The following is a 310-amino-acid chain: Ribosomal RNA small subunit methyltransferase H (310 aa).

S-adenosyl-L-methionine is bound by residues 33–35, Asp53, Phe79, Asp100, and Gln107; that span reads AGH.

It belongs to the methyltransferase superfamily. RsmH family.

Its subcellular location is the cytoplasm. It carries out the reaction cytidine(1402) in 16S rRNA + S-adenosyl-L-methionine = N(4)-methylcytidine(1402) in 16S rRNA + S-adenosyl-L-homocysteine + H(+). Its function is as follows. Specifically methylates the N4 position of cytidine in position 1402 (C1402) of 16S rRNA. In Clostridium tetani (strain Massachusetts / E88), this protein is Ribosomal RNA small subunit methyltransferase H.